A 314-amino-acid polypeptide reads, in one-letter code: tRNA pseudouridine synthase B (314 aa).

Aspartate 54 (nucleophile) is an active-site residue.

It belongs to the pseudouridine synthase TruB family. Type 1 subfamily.

The catalysed reaction is uridine(55) in tRNA = pseudouridine(55) in tRNA. Functionally, responsible for synthesis of pseudouridine from uracil-55 in the psi GC loop of transfer RNAs. In Ralstonia nicotianae (strain ATCC BAA-1114 / GMI1000) (Ralstonia solanacearum), this protein is tRNA pseudouridine synthase B.